Reading from the N-terminus, the 330-residue chain is Anthranilate phosphoribosyltransferase (330 aa).

Residues Gly75, 78–79 (GD), Thr83, 85–88 (NVST), 103–111 (KHGNRAASS), and Ala115 each bind 5-phospho-alpha-D-ribose 1-diphosphate. Gly75 serves as a coordination point for anthranilate. Residue Ser87 participates in Mg(2+) binding. Asn106 contacts anthranilate. An anthranilate-binding site is contributed by Arg161. Mg(2+) is bound by residues Asp220 and Glu221.

It belongs to the anthranilate phosphoribosyltransferase family. Homodimer. Mg(2+) is required as a cofactor.

It catalyses the reaction N-(5-phospho-beta-D-ribosyl)anthranilate + diphosphate = 5-phospho-alpha-D-ribose 1-diphosphate + anthranilate. It participates in amino-acid biosynthesis; L-tryptophan biosynthesis; L-tryptophan from chorismate: step 2/5. Functionally, catalyzes the transfer of the phosphoribosyl group of 5-phosphorylribose-1-pyrophosphate (PRPP) to anthranilate to yield N-(5'-phosphoribosyl)-anthranilate (PRA). The polypeptide is Anthranilate phosphoribosyltransferase (Erythrobacter litoralis (strain HTCC2594)).